The following is a 242-amino-acid chain: MDGVKEWFNSIPPVSRYMFAIFLGIPVLAAMHLISFNYLYLDFTFTFKHFHLWRLITAPCIISSLGPMFLFNLIFFYQYTTRLESLNYAGKSDDYLFCIIFISICNIIFGLIFEYYFLGTMTIMSLIYIYSRMNPTGTSNFYGFFSFKTIYLPWVFLVAHFLQTGHPPYSDFLAIVSGHIFFYLTDIYPRANGVPALIKTPKFITNIFNKGDRNPNNVRRDPRTGRPIQEGGYNWGQGHALG.

Residues 1-18 lie on the Cytoplasmic side of the membrane; it reads MDGVKEWFNSIPPVSRYM. The chain crosses the membrane as a helical span at residues 19 to 39; that stretch reads FAIFLGIPVLAAMHLISFNYL. Over 40–98 the chain is Lumenal; the sequence is YLDFTFTFKHFHLWRLITAPCIISSLGPMFLFNLIFFYQYTTRLESLNYAGKSDDYLFC. Residues 99–119 traverse the membrane as a helical segment; that stretch reads IIFISICNIIFGLIFEYYFLG. The Cytoplasmic portion of the chain corresponds to 120-140; the sequence is TMTIMSLIYIYSRMNPTGTSN. The chain crosses the membrane as a helical span at residues 141–161; the sequence is FYGFFSFKTIYLPWVFLVAHF. Residues 162 to 167 are Lumenal-facing; it reads LQTGHP. A helical transmembrane segment spans residues 168 to 188; that stretch reads PYSDFLAIVSGHIFFYLTDIY. The Cytoplasmic segment spans residues 189 to 242; it reads PRANGVPALIKTPKFITNIFNKGDRNPNNVRRDPRTGRPIQEGGYNWGQGHALG. The span at 214 to 224 shows a compositional bias: basic and acidic residues; the sequence is NPNNVRRDPRT. Residues 214 to 242 form a disordered region; that stretch reads NPNNVRRDPRTGRPIQEGGYNWGQGHALG. Residues 233–242 show a composition bias toward gly residues; that stretch reads YNWGQGHALG.

It belongs to the derlin family.

The protein localises to the endoplasmic reticulum membrane. Functionally, may be involved in the degradation process of specific misfolded endoplasmic reticulum (ER) luminal proteins. May also involved in endoplasmic reticulum stress-induced pre-emptive quality control, a mechanism that selectively attenuates the translocation of newly synthesized proteins into the endoplasmic reticulum and reroutes them to the cytosol for proteasomal degradation. The sequence is that of Probable derlin-1 homolog from Dictyostelium discoideum (Social amoeba).